Here is a 125-residue protein sequence, read N- to C-terminus: Small ribosomal subunit protein uS13 (125 aa).

A disordered region spans residues 97-125 (PVRGQKTRSNARTRKGPRPSRIKTKKKSS). Positions 101–125 (QKTRSNARTRKGPRPSRIKTKKKSS) are enriched in basic residues.

The protein belongs to the universal ribosomal protein uS13 family. As to quaternary structure, part of the 30S ribosomal subunit. Forms a loose heterodimer with protein S19. Forms two bridges to the 50S subunit in the 70S ribosome.

Located at the top of the head of the 30S subunit, it contacts several helices of the 16S rRNA. In the 70S ribosome it contacts the 23S rRNA (bridge B1a) and protein L5 of the 50S subunit (bridge B1b), connecting the 2 subunits; these bridges are implicated in subunit movement. Contacts the tRNAs in the A and P-sites. The sequence is that of Small ribosomal subunit protein uS13 from Thermotoga maritima (strain ATCC 43589 / DSM 3109 / JCM 10099 / NBRC 100826 / MSB8).